The chain runs to 200 residues: Serotonin N-acetyltransferase 2, chloroplastic (200 aa).

A chloroplast-targeting transit peptide spans 1-41; sequence MQMQAARPRVGVRPRGGIRPFPLPTLSFNNNSNRSACACAC. In terms of domain architecture, N-acetyltransferase spans 55-195; it reads FAVRRSSTGL…MAFYRSRQQI (141 aa).

The protein resides in the cytoplasm. The protein localises to the plastid. It localises to the chloroplast. It catalyses the reaction serotonin + acetyl-CoA = N-acetylserotonin + CoA + H(+). It carries out the reaction tyramine + acetyl-CoA = N-acetyltyramine + CoA + H(+). The catalysed reaction is tryptamine + acetyl-CoA = N-acetyltryptamine + CoA + H(+). The enzyme catalyses 5-methoxytryptamine + acetyl-CoA = melatonin + CoA + H(+). It participates in aromatic compound metabolism; melatonin biosynthesis; melatonin from serotonin: step 1/2. Functionally, catalyzes the N-acetylation of serotonin into N-acetylserotonin, the penultimate step in the synthesis of melatonin. Catalyzes in vitro the N-acetylation of tryptamine to produce N-acetyltryptamine, 5-methoxytryptamine to produce melatonin and tyramine to produce N-acetyltyramine. The sequence is that of Serotonin N-acetyltransferase 2, chloroplastic from Oryza sativa subsp. japonica (Rice).